We begin with the raw amino-acid sequence, 284 residues long: MSFDEIAPDAKKVAIYGKGGIGKSTTTQNTAAALAYFFDKKVMIHGCDPKADSTRMILHGKPQDTVMDVLREEGEEAVTLEKVRKIGFKDILCVESGGPEPGVGCAGRGVITAVDMMRELEGYPDDLDNLFFDVLGDVVCGGFAMPLRDGLAQEIYIVTSGEMMALYAANNIAKGILKYAEQSGVRLGGIICNARNVDGEKELMDEFCDKLGTKLIHYVPRDNIVQKAEFNKMTVIEFDPECNQAKEYRTLAKNIDENDELVKPTPMTMDELEELVVKYGLIDL.

Residue 17 to 24 (GKGGIGKS) participates in ATP binding. C105 lines the [4Fe-4S] cluster pocket. ADP-ribosylarginine; by dinitrogenase reductase ADP-ribosyltransferase is present on R108. C140 lines the [4Fe-4S] cluster pocket.

The protein belongs to the NifH/BchL/ChlL family. As to quaternary structure, homodimer. [4Fe-4S] cluster is required as a cofactor. Post-translationally, the reversible ADP-ribosylation of Arg-108 inactivates the nitrogenase reductase and regulates nitrogenase activity.

It catalyses the reaction N2 + 8 reduced [2Fe-2S]-[ferredoxin] + 16 ATP + 16 H2O = H2 + 8 oxidized [2Fe-2S]-[ferredoxin] + 2 NH4(+) + 16 ADP + 16 phosphate + 6 H(+). In terms of biological role, the key enzymatic reactions in nitrogen fixation are catalyzed by the nitrogenase complex, which has 2 components: the iron protein and the molybdenum-iron protein. The sequence is that of Nitrogenase iron protein 1 (nifH1) from Methanothermococcus thermolithotrophicus (Methanococcus thermolithotrophicus).